Here is an 89-residue protein sequence, read N- to C-terminus: Small ribosomal subunit protein uS15 (89 aa).

It belongs to the universal ribosomal protein uS15 family. In terms of assembly, part of the 30S ribosomal subunit. Forms a bridge to the 50S subunit in the 70S ribosome, contacting the 23S rRNA.

Functionally, one of the primary rRNA binding proteins, it binds directly to 16S rRNA where it helps nucleate assembly of the platform of the 30S subunit by binding and bridging several RNA helices of the 16S rRNA. In terms of biological role, forms an intersubunit bridge (bridge B4) with the 23S rRNA of the 50S subunit in the ribosome. The protein is Small ribosomal subunit protein uS15 of Acinetobacter baylyi (strain ATCC 33305 / BD413 / ADP1).